The chain runs to 61 residues: Small ribosomal subunit protein uS14 (61 aa).

Zn(2+) contacts are provided by cysteine 24, cysteine 27, cysteine 40, and cysteine 43.

This sequence belongs to the universal ribosomal protein uS14 family. Zinc-binding uS14 subfamily. In terms of assembly, part of the 30S ribosomal subunit. Contacts proteins S3 and S10. The cofactor is Zn(2+).

Functionally, binds 16S rRNA, required for the assembly of 30S particles and may also be responsible for determining the conformation of the 16S rRNA at the A site. In Geobacillus stearothermophilus (Bacillus stearothermophilus), this protein is Small ribosomal subunit protein uS14.